The sequence spans 248 residues: 14-3-3 protein zeta (248 aa).

The protein belongs to the 14-3-3 family. As to quaternary structure, homodimer.

Its subcellular location is the cytoplasm. Adapter protein implicated in the regulation of a large spectrum of both general and specialized signaling pathways. Binds to a large number of partners, usually by recognition of a phosphoserine or phosphothreonine motif. Binding generally results in the modulation of the activity of the binding partner. The polypeptide is 14-3-3 protein zeta (14-3-3zeta) (Aedes aegypti (Yellowfever mosquito)).